We begin with the raw amino-acid sequence, 282 residues long: NADPH-dependent 7-cyano-7-deazaguanine reductase (282 aa).

88 to 90 (IES) lines the substrate pocket. 90–91 (SK) contacts NADPH. The Thioimide intermediate role is filled by Cys-190. Asp-197 serves as the catalytic Proton donor. 229–230 (HE) is a substrate binding site. 258-259 (RG) serves as a coordination point for NADPH.

Belongs to the GTP cyclohydrolase I family. QueF type 2 subfamily. As to quaternary structure, homodimer.

It is found in the cytoplasm. The catalysed reaction is 7-aminomethyl-7-carbaguanine + 2 NADP(+) = 7-cyano-7-deazaguanine + 2 NADPH + 3 H(+). It participates in tRNA modification; tRNA-queuosine biosynthesis. Its function is as follows. Catalyzes the NADPH-dependent reduction of 7-cyano-7-deazaguanine (preQ0) to 7-aminomethyl-7-deazaguanine (preQ1). The chain is NADPH-dependent 7-cyano-7-deazaguanine reductase from Escherichia coli (strain K12 / MC4100 / BW2952).